Here is a 543-residue protein sequence, read N- to C-terminus: Protein pbn1 (543 aa).

At 1–503 (MRRRITFVQR…KGFFQSKAIE (503 aa)) the chain is on the lumenal side. N-linked (GlcNAc...) asparagine glycosylation is present at N409. Residues 504–524 (LGTMIVIGLGSLWVLWKLGAI) traverse the membrane as a helical segment. Topologically, residues 525-543 (AWSSGTRPQRKSTKQKKSE) are cytoplasmic.

This sequence belongs to the PIGX family.

It localises to the endoplasmic reticulum membrane. The protein operates within glycolipid biosynthesis; glycosylphosphatidylinositol-anchor biosynthesis. Functionally, required for proper folding and/or the stability of a subset of proteins in the endoplasmic reticulum. Component of glycosylphosphatidylinositol-mannosyltransferase 1 which transfers the first of the 4 mannoses in the GPI-anchor precursors during GPI-anchor biosynthesis. Probably acts by stabilizing the mannosyltransferase gpi14. The sequence is that of Protein pbn1 (pbn1) from Aspergillus oryzae (strain ATCC 42149 / RIB 40) (Yellow koji mold).